The primary structure comprises 450 residues: Cysteine proteinase (450 aa).

Positions 1–20 are cleaved as a signal peptide; it reads MPRTEMVRFVRLPVVLLAMA. The propeptide at 21–125 is activation peptide; that stretch reads ACLASVALGS…RKTVNVTTGR (105 aa). An N-linked (GlcNAc...) asparagine glycan is attached at N120. Cysteines 147 and 188 form a disulfide. Residues C150, H287, and N307 contribute to the active site. The segment at 343–450 is 108-residue extension; that stretch reads TPPPPPPPPP…TKAARLVPHQ (108 aa). The N-linked (GlcNAc...) asparagine glycan is linked to N397.

Belongs to the peptidase C1 family.

The protein resides in the lysosome. Functionally, the cysteine proteinases have a potential role in host-parasite interaction and virulence. The polypeptide is Cysteine proteinase (Trypanosoma brucei brucei).